The sequence spans 85 residues: Large ribosomal subunit protein bL27 (85 aa).

The interval 1–24 (MAHKKGQGSSRNGRDSNAQRRGVK) is disordered.

The protein belongs to the bacterial ribosomal protein bL27 family.

This chain is Large ribosomal subunit protein bL27, found in Syntrophus aciditrophicus (strain SB).